A 567-amino-acid chain; its full sequence is MSQRITIDPVTRIEGHLRIDCEIENGVVSKAWASGTMWRGMEEIVKNRDPRDAWMIVQRICGVCTTTHALSSVRAAESALNIDVPVNAQYIRNIILAAHTTHDHIVHFYQLSALDWVDITSALQADPTKASEMLKGVSTWHLNSPEEFTKVQNKIKDLVASGQLGIFANGYWGHPAMKLPPEVNLIAVAHYLQALECQRDANRVVALLGGKTPHIQNLAVGGVANPINLDGLGVLNLERLMYIKSFIDKLSDFVEQVYKVDTAVIAAFYPEWLTRGKGAVNYLSVPEFPTDSKNGSFLFPGGYIENADLSSYRPITSHSDEYLIKGIQESAKHSWYKDEAPQAPWEGTTIPAYDGWSDDGKYSWVKSPTFYGKTVEVGPLANMLVKLAAGRESTQNKLNEIVAIYQKLTGNTLEVAQLHSTLGRIIGRTVHCCELQDILQNQYSALITNIGKGDHTTFVKPNIPATGEFKGVGFLEAPRGMLSHWMVIKDGIISNYQAVVPSTWNSGPRNFNDDVGPYEQSLVGTPVADPNKPLEVVRTIHSFDPCMACAVHVVDADGNEVVSVKVL.

Residues Cys-61, Cys-64, Cys-546, and Cys-549 each contribute to the Ni(2+) site. A propeptide spanning residues 553–567 is cleaved from the precursor; the sequence is VVDADGNEVVSVKVL.

It belongs to the [NiFe]/[NiFeSe] hydrogenase large subunit family. Heterodimer of a large and a small subunit. Ni(2+) is required as a cofactor.

The protein resides in the cell membrane. It carries out the reaction H2 + A = AH2. Functionally, this is one of three E.coli hydrogenases synthesized in response to different physiological conditions. HYD2 is involved in hydrogen uptake. The polypeptide is Hydrogenase-2 large chain (hybC) (Escherichia coli O157:H7).